The primary structure comprises 266 residues: 4-hydroxy-tetrahydrodipicolinate reductase (266 aa).

Position 10-15 (10-15 (GPRGRM)) interacts with NAD(+). An NADP(+)-binding site is contributed by lysine 38. Residues 99–101 (GTT) and 125–128 (APNF) contribute to the NAD(+) site. The active-site Proton donor/acceptor is the histidine 155. Histidine 156 contributes to the (S)-2,3,4,5-tetrahydrodipicolinate binding site. Catalysis depends on lysine 159, which acts as the Proton donor. 165–166 (GT) lines the (S)-2,3,4,5-tetrahydrodipicolinate pocket.

Belongs to the DapB family.

The protein localises to the cytoplasm. The catalysed reaction is (S)-2,3,4,5-tetrahydrodipicolinate + NAD(+) + H2O = (2S,4S)-4-hydroxy-2,3,4,5-tetrahydrodipicolinate + NADH + H(+). The enzyme catalyses (S)-2,3,4,5-tetrahydrodipicolinate + NADP(+) + H2O = (2S,4S)-4-hydroxy-2,3,4,5-tetrahydrodipicolinate + NADPH + H(+). Its pathway is amino-acid biosynthesis; L-lysine biosynthesis via DAP pathway; (S)-tetrahydrodipicolinate from L-aspartate: step 4/4. Its function is as follows. Catalyzes the conversion of 4-hydroxy-tetrahydrodipicolinate (HTPA) to tetrahydrodipicolinate. In Bacillus cereus (strain B4264), this protein is 4-hydroxy-tetrahydrodipicolinate reductase.